A 283-amino-acid chain; its full sequence is Phytanoyl-CoA dioxygenase (283 aa).

2-oxoglutarate-binding positions include Lys-99, Met-138, 153-155 (HQD), and Trp-170. Fe cation contacts are provided by His-153 and Asp-155. His-238 provides a ligand contact to Fe cation. 2-oxoglutarate-binding residues include Ser-240 and Arg-249.

The protein belongs to the PhyH family. Fe cation serves as cofactor. L-ascorbate is required as a cofactor.

It catalyses the reaction phytanoyl-CoA + 2-oxoglutarate + O2 = 2-hydroxyphytanoyl-CoA + succinate + CO2. It functions in the pathway lipid metabolism; fatty acid metabolism. Its function is as follows. Converts phytanoyl-CoA to 2-hydroxyphytanoyl-CoA. This Arabidopsis thaliana (Mouse-ear cress) protein is Phytanoyl-CoA dioxygenase.